Reading from the N-terminus, the 313-residue chain is Inner membrane ABC transporter permease protein YdcU (313 aa).

Residues Met1–Pro25 are Cytoplasmic-facing. Residues Gly26 to Gly46 form a helical membrane-spanning segment. Residues Ser47–Thr92 are Periplasmic-facing. The ABC transmembrane type-1 domain maps to Ile87–Ala302. Residues Met93–Ala113 traverse the membrane as a helical segment. The Cytoplasmic portion of the chain corresponds to Arg114–Ala122. Residues Phe123–Trp143 form a helical membrane-spanning segment. Residues Thr144–Gln154 are Periplasmic-facing. The helical transmembrane segment at Trp155–Val175 threads the bilayer. Residues Gly176–Arg187 lie on the Cytoplasmic side of the membrane. The chain crosses the membrane as a helical span at residues Phe188 to Glu208. Residues Arg209–Arg230 are Periplasmic-facing. A helical membrane pass occupies residues Tyr231 to Leu251. Residue Thr252 is a topological domain, cytoplasmic. Residues Leu253–Val273 form a helical membrane-spanning segment. Residues Tyr274 to Met283 are Periplasmic-facing. Residues Pro284–Val304 form a helical membrane-spanning segment. Residues Lys305 to Leu313 lie on the Cytoplasmic side of the membrane.

Belongs to the binding-protein-dependent transport system permease family. CysTW subfamily.

The protein localises to the cell inner membrane. In terms of biological role, probably part of the ABC transporter complex YdcSTUV. Probably responsible for the translocation of the substrate across the membrane. The polypeptide is Inner membrane ABC transporter permease protein YdcU (ydcU) (Escherichia coli (strain K12)).